A 214-amino-acid polypeptide reads, in one-letter code: Adenylate kinase (214 aa).

10 to 15 (GAGKGT) contacts ATP. The NMP stretch occupies residues 30–59 (STGDMLRSAVKAGTELGLKAKALMDHGKLV). AMP contacts are provided by residues Thr-31, Arg-36, 57-59 (KLV), 85-88 (GFPR), and Gln-92. Positions 122–159 (GRRIHAPSGRVYHIKFNPPVVENKDDVTGEELTVRKDD) are LID. Residues Arg-123 and 132–133 (VY) each bind ATP. AMP contacts are provided by Arg-156 and Arg-167. Position 200 (Arg-200) interacts with ATP.

This sequence belongs to the adenylate kinase family. In terms of assembly, monomer.

The protein localises to the cytoplasm. The catalysed reaction is AMP + ATP = 2 ADP. It functions in the pathway purine metabolism; AMP biosynthesis via salvage pathway; AMP from ADP: step 1/1. Functionally, catalyzes the reversible transfer of the terminal phosphate group between ATP and AMP. Plays an important role in cellular energy homeostasis and in adenine nucleotide metabolism. This Photorhabdus laumondii subsp. laumondii (strain DSM 15139 / CIP 105565 / TT01) (Photorhabdus luminescens subsp. laumondii) protein is Adenylate kinase.